Here is a 333-residue protein sequence, read N- to C-terminus: Ornithine carbamoyltransferase (333 aa).

Carbamoyl phosphate-binding positions include 57-60, arginine 108, and 135-138; these read STRT and HPTQ. Residues asparagine 168, aspartate 232, and 236–237 each bind L-ornithine; that span reads SM. Carbamoyl phosphate contacts are provided by residues 274 to 275 and arginine 319; that span reads CL.

The protein belongs to the aspartate/ornithine carbamoyltransferase superfamily. OTCase family.

The protein localises to the cytoplasm. The enzyme catalyses carbamoyl phosphate + L-ornithine = L-citrulline + phosphate + H(+). The protein operates within amino-acid degradation; L-arginine degradation via ADI pathway; carbamoyl phosphate from L-arginine: step 2/2. Its function is as follows. Reversibly catalyzes the transfer of the carbamoyl group from carbamoyl phosphate (CP) to the N(epsilon) atom of ornithine (ORN) to produce L-citrulline. The polypeptide is Ornithine carbamoyltransferase (Pediococcus pentosaceus (strain ATCC 25745 / CCUG 21536 / LMG 10740 / 183-1w)).